Consider the following 475-residue polypeptide: Ribulose bisphosphate carboxylase large chain (475 aa).

Residues 1-2 (MS) constitute a propeptide that is removed on maturation. Pro3 bears the N-acetylproline mark. An N6,N6,N6-trimethyllysine modification is found at Lys14. Substrate contacts are provided by Asn123 and Thr173. Lys175 functions as the Proton acceptor in the catalytic mechanism. Residue Lys177 coordinates substrate. Lys201, Asp203, and Glu204 together coordinate Mg(2+). The residue at position 201 (Lys201) is an N6-carboxylysine. The Proton acceptor role is filled by His294. 3 residues coordinate substrate: Arg295, His327, and Ser379.

The protein belongs to the RuBisCO large chain family. Type I subfamily. As to quaternary structure, heterohexadecamer of 8 large chains and 8 small chains; disulfide-linked. The disulfide link is formed within the large subunit homodimers. Mg(2+) is required as a cofactor. Post-translationally, the disulfide bond which can form in the large chain dimeric partners within the hexadecamer appears to be associated with oxidative stress and protein turnover.

The protein resides in the plastid. The protein localises to the chloroplast. The catalysed reaction is 2 (2R)-3-phosphoglycerate + 2 H(+) = D-ribulose 1,5-bisphosphate + CO2 + H2O. The enzyme catalyses D-ribulose 1,5-bisphosphate + O2 = 2-phosphoglycolate + (2R)-3-phosphoglycerate + 2 H(+). Its function is as follows. RuBisCO catalyzes two reactions: the carboxylation of D-ribulose 1,5-bisphosphate, the primary event in carbon dioxide fixation, as well as the oxidative fragmentation of the pentose substrate in the photorespiration process. Both reactions occur simultaneously and in competition at the same active site. The protein is Ribulose bisphosphate carboxylase large chain of Afrocarpus gracilior (African fern pine).